Here is a 277-residue protein sequence, read N- to C-terminus: Release factor glutamine methyltransferase (277 aa).

Residues 117–121 (GTGCG), aspartate 140, tryptophan 168, and asparagine 182 contribute to the S-adenosyl-L-methionine site. Substrate is bound at residue 182 to 185 (NPPY).

Belongs to the protein N5-glutamine methyltransferase family. PrmC subfamily.

The enzyme catalyses L-glutaminyl-[peptide chain release factor] + S-adenosyl-L-methionine = N(5)-methyl-L-glutaminyl-[peptide chain release factor] + S-adenosyl-L-homocysteine + H(+). Its function is as follows. Methylates the class 1 translation termination release factors RF1/PrfA and RF2/PrfB on the glutamine residue of the universally conserved GGQ motif. The protein is Release factor glutamine methyltransferase of Buchnera aphidicola subsp. Acyrthosiphon pisum (strain APS) (Acyrthosiphon pisum symbiotic bacterium).